We begin with the raw amino-acid sequence, 696 residues long: Two-component response regulator ORR22 (696 aa).

The region spanning 27–142 (RVLAVDDDPV…ELRNIWQHVV (116 aa)) is the Response regulatory domain. D78 is subject to 4-aspartylphosphate. The tract at residues 154–214 (LDFSKECNKP…DYQENDEPSA (61 aa)) is disordered. Over residues 176-185 (TCGSSDQNGR) the composition is skewed to polar residues. Residues 195 to 211 (GEDDDEGDDNDYQENDE) show a composition bias toward acidic residues. The myb-like GARP DNA-binding region spans 214-273 (AAKKPRVVWSVELHRKFVAAVNQLGIDKAVPKRILELMNVEKLTRENVASHLQKYRLYLK).

This sequence belongs to the ARR family. Type-B subfamily. Two-component system major event consists of a His-to-Asp phosphorelay between a sensor histidine kinase (HK) and a response regulator (RR). In plants, the His-to-Asp phosphorelay involves an additional intermediate named Histidine-containing phosphotransfer protein (HPt). This multistep phosphorelay consists of a His-Asp-His-Asp sequential transfer of a phosphate group between first a His and an Asp of the HK protein, followed by the transfer to a conserved His of the HPt protein and finally the transfer to an Asp in the receiver domain of the RR protein.

Its subcellular location is the nucleus. Transcriptional activator that binds specific DNA sequence. Functions as a response regulator involved in His-to-Asp phosphorelay signal transduction system. Phosphorylation of the Asp residue in the receiver domain activates the ability of the protein to promote the transcription of target genes. May directly activate some type-A response regulators in response to cytokinins. Functions as a response regulator in response to cytokinins. The protein is Two-component response regulator ORR22 of Oryza sativa subsp. japonica (Rice).